Here is a 342-residue protein sequence, read N- to C-terminus: tRNA N6-adenosine threonylcarbamoyltransferase (342 aa).

2 residues coordinate Fe cation: H111 and H115. Substrate contacts are provided by residues 134–138 (LVSGG), D167, G180, and N272. D300 is a binding site for Fe cation.

It belongs to the KAE1 / TsaD family. The cofactor is Fe(2+).

Its subcellular location is the cytoplasm. The catalysed reaction is L-threonylcarbamoyladenylate + adenosine(37) in tRNA = N(6)-L-threonylcarbamoyladenosine(37) in tRNA + AMP + H(+). Functionally, required for the formation of a threonylcarbamoyl group on adenosine at position 37 (t(6)A37) in tRNAs that read codons beginning with adenine. Is involved in the transfer of the threonylcarbamoyl moiety of threonylcarbamoyl-AMP (TC-AMP) to the N6 group of A37, together with TsaE and TsaB. TsaD likely plays a direct catalytic role in this reaction. The protein is tRNA N6-adenosine threonylcarbamoyltransferase of Aromatoleum aromaticum (strain DSM 19018 / LMG 30748 / EbN1) (Azoarcus sp. (strain EbN1)).